The chain runs to 128 residues: Aspartate 1-decarboxylase (128 aa).

Ser25 functions as the Schiff-base intermediate with substrate; via pyruvic acid in the catalytic mechanism. Position 25 is a pyruvic acid (Ser) (Ser25). Position 57 (Thr57) interacts with substrate. Residue Tyr58 is the Proton donor of the active site. Substrate is bound at residue 73–75 (GAA).

The protein belongs to the PanD family. In terms of assembly, heterooctamer of four alpha and four beta subunits. The cofactor is pyruvate. In terms of processing, is synthesized initially as an inactive proenzyme, which is activated by self-cleavage at a specific serine bond to produce a beta-subunit with a hydroxyl group at its C-terminus and an alpha-subunit with a pyruvoyl group at its N-terminus.

It is found in the cytoplasm. It catalyses the reaction L-aspartate + H(+) = beta-alanine + CO2. Its pathway is cofactor biosynthesis; (R)-pantothenate biosynthesis; beta-alanine from L-aspartate: step 1/1. Catalyzes the pyruvoyl-dependent decarboxylation of aspartate to produce beta-alanine. The protein is Aspartate 1-decarboxylase of Chlorobium limicola (strain DSM 245 / NBRC 103803 / 6330).